A 319-amino-acid polypeptide reads, in one-letter code: tRNA N6-adenosine threonylcarbamoyltransferase (319 aa).

Residues His-110 and His-114 each contribute to the Fe cation site. Substrate-binding positions include 135–139 (VVSGG), Asp-168, Gly-181, Asp-185, and Asn-277. Asp-301 contributes to the Fe cation binding site.

This sequence belongs to the KAE1 / TsaD family. It depends on Fe(2+) as a cofactor.

Its subcellular location is the cytoplasm. It catalyses the reaction L-threonylcarbamoyladenylate + adenosine(37) in tRNA = N(6)-L-threonylcarbamoyladenosine(37) in tRNA + AMP + H(+). Required for the formation of a threonylcarbamoyl group on adenosine at position 37 (t(6)A37) in tRNAs that read codons beginning with adenine. Is involved in the transfer of the threonylcarbamoyl moiety of threonylcarbamoyl-AMP (TC-AMP) to the N6 group of A37, together with TsaE and TsaB. TsaD likely plays a direct catalytic role in this reaction. The polypeptide is tRNA N6-adenosine threonylcarbamoyltransferase (Mycoplasma pneumoniae (strain ATCC 29342 / M129 / Subtype 1) (Mycoplasmoides pneumoniae)).